A 20-amino-acid polypeptide reads, in one-letter code: Tetracycline resistance leader peptide (20 aa).

Residues 1–20 are disordered; sequence MKCNKMNRVQLKEGSVSMTL.

The sequence is that of Tetracycline resistance leader peptide (tetL) from Bacillus subtilis (strain 168).